The chain runs to 569 residues: Cationic amino acid transporter 9, chloroplastic (569 aa).

Residues 1-41 (MGGHEGFSNQRLSSATWFSHFRASALRSKSLPPPSSQTAVR) constitute a chloroplast transit peptide. Helical transmembrane passes span 53-73 (GLFD…VFVV), 81-101 (AGPG…LNAL), 113-135 (VVGG…LVFV), 155-175 (YAVA…LWMG), 181-201 (LGGL…LTLV), 215-235 (VMTA…AFEI), 250-270 (AVLT…AVAN), 284-304 (IGIM…CLVL), 333-353 (ILIS…GLYV), 406-428 (HILS…ALRL), 444-464 (WQEG…AGVF), 467-487 (FSAS…ASAV), 502-522 (FSCP…IFLF), and 528-548 (EAWI…ALYG).

It belongs to the amino acid-polyamine-organocation (APC) superfamily. Cationic amino acid transporter (CAT) (TC 2.A.3.3) family. Expressed in roots, stems, flowers, and leaves.

The protein localises to the plastid. It is found in the chloroplast membrane. In terms of biological role, permease involved in the transport of the cationic amino acids. The sequence is that of Cationic amino acid transporter 9, chloroplastic (CAT9) from Arabidopsis thaliana (Mouse-ear cress).